The following is a 162-amino-acid chain: Mitochondrial intermembrane space import and assembly protein 40 homolog (162 aa).

The tract at residues 1–61 (MGQAQSDENS…DNENESLEAK (61 aa)) is disordered. A compositionally biased stretch (low complexity) spans 9-18 (NSIPTTTTTN). Intrachain disulfides connect C68–C70, C79–C112, and C89–C102. The region spanning 76–120 (NGSCGSQFSEAFLCFLKSTAEEKGSDCVNPFVALQSCINANPDAF) is the CHCH domain. 2 consecutive short sequence motifs (cx9C motif) follow at residues 79-89 (CGSQFSEAFLC) and 102-112 (CVNPFVALQSC). Residues 119–162 (AFSKSVTGDEKETEKKEEQPPVQDHRIIPPLWAKDPPRSGNSKL) form a disordered region. A compositionally biased stretch (basic and acidic residues) spans 125–145 (TGDEKETEKKEEQPPVQDHRI).

It is found in the mitochondrion intermembrane space. The protein localises to the peroxisome matrix. Required for the import and folding of small cysteine-containing proteins in the mitochondrial intermembrane space. Involved in the mitochondrial oxidative folding of the copper-zinc superoxide dismutase CSD1, the copper chaperone for superoxide dismutase CCS, and subunits of the mitochondrial membrane respiratory chain NADH dehydrogenase (Complex I). Involved in the peroxisomal oxidative folding of the copper-zinc superoxide dismutase CSD3, and the fatty acid beta-oxidation multifunctional protein AIM1. In Arabidopsis thaliana (Mouse-ear cress), this protein is Mitochondrial intermembrane space import and assembly protein 40 homolog.